A 62-amino-acid polypeptide reads, in one-letter code: Sperm protamine P1 (62 aa).

Residues 1–62 (MARSRRHSRS…RCSRRRRRRC (62 aa)) are disordered.

This sequence belongs to the protamine P1 family. As to expression, testis.

It localises to the nucleus. The protein localises to the chromosome. Protamines substitute for histones in the chromatin of sperm during the haploid phase of spermatogenesis. They compact sperm DNA into a highly condensed, stable and inactive complex. The polypeptide is Sperm protamine P1 (PRM1) (Planigale ingrami (Long-tailed planigale)).